Reading from the N-terminus, the 243-residue chain is Cytochrome c oxidase subunit 2 (243 aa).

Over 1-34 (MNNIIHNDAPTPWGIYFQDGASPVYDGIVELHDQ) the chain is Mitochondrial intermembrane. The helical transmembrane segment at 35-55 (VLFYLLIVLVGVSWILFSTIL) threads the bilayer. At 56 to 74 (RFRGSGIVHKYHNHSTTIE) the chain is on the mitochondrial matrix side. A helical transmembrane segment spans residues 75-97 (FVWTVSPALLLIAIAFPSFKLLY). At 98–243 (LMDEVIDPSI…EKFLSWLDNQ (146 aa)) the chain is on the mitochondrial intermembrane side. Residues histidine 178, cysteine 213, glutamate 215, cysteine 217, histidine 221, and methionine 224 each contribute to the Cu cation site. Glutamate 215 lines the Mg(2+) pocket.

Belongs to the cytochrome c oxidase subunit 2 family. Component of the cytochrome c oxidase (complex IV, CIV), a multisubunit enzyme composed of a catalytic core of 3 subunits and several supernumerary subunits. The complex exists as a monomer or a dimer and forms supercomplexes (SCs) in the inner mitochondrial membrane with ubiquinol-cytochrome c oxidoreductase (cytochrome b-c1 complex, complex III, CIII). Cu cation serves as cofactor.

The protein resides in the mitochondrion inner membrane. The enzyme catalyses 4 Fe(II)-[cytochrome c] + O2 + 8 H(+)(in) = 4 Fe(III)-[cytochrome c] + 2 H2O + 4 H(+)(out). In terms of biological role, component of the cytochrome c oxidase, the last enzyme in the mitochondrial electron transport chain which drives oxidative phosphorylation. The respiratory chain contains 3 multisubunit complexes succinate dehydrogenase (complex II, CII), ubiquinol-cytochrome c oxidoreductase (cytochrome b-c1 complex, complex III, CIII) and cytochrome c oxidase (complex IV, CIV), that cooperate to transfer electrons derived from NADH and succinate to molecular oxygen, creating an electrochemical gradient over the inner membrane that drives transmembrane transport and the ATP synthase. Cytochrome c oxidase is the component of the respiratory chain that catalyzes the reduction of oxygen to water. Electrons originating from reduced cytochrome c in the intermembrane space (IMS) are transferred via the dinuclear copper A center (CU(A)) of subunit 2 and heme A of subunit 1 to the active site in subunit 1, a binuclear center (BNC) formed by heme A3 and copper B (CU(B)). The BNC reduces molecular oxygen to 2 water molecules using 4 electrons from cytochrome c in the IMS and 4 protons from the mitochondrial matrix. The protein is Cytochrome c oxidase subunit 2 of Pneumocystis carinii.